The sequence spans 295 residues: Bifunctional protein FolD (295 aa).

NADP(+)-binding positions include 165–167 (GRG), Ser192, and Ile233.

The protein belongs to the tetrahydrofolate dehydrogenase/cyclohydrolase family. Homodimer.

It carries out the reaction (6R)-5,10-methylene-5,6,7,8-tetrahydrofolate + NADP(+) = (6R)-5,10-methenyltetrahydrofolate + NADPH. The enzyme catalyses (6R)-5,10-methenyltetrahydrofolate + H2O = (6R)-10-formyltetrahydrofolate + H(+). It functions in the pathway one-carbon metabolism; tetrahydrofolate interconversion. Functionally, catalyzes the oxidation of 5,10-methylenetetrahydrofolate to 5,10-methenyltetrahydrofolate and then the hydrolysis of 5,10-methenyltetrahydrofolate to 10-formyltetrahydrofolate. The chain is Bifunctional protein FolD from Tropheryma whipplei (strain Twist) (Whipple's bacillus).